A 325-amino-acid chain; its full sequence is RepFIB replication protein A (325 aa).

Residues 279 to 298 are disordered; it reads APNDESKENPLPPSPAEKVS.

It belongs to the initiator RepB protein family.

Its function is as follows. This protein is essential for plasmid replication; it is involved in copy control functions. In vitro, binds to the DNA repeat units, BCDD'D'', EFG and HIJ. This chain is RepFIB replication protein A (repB), found in Escherichia coli (strain K12).